A 363-amino-acid polypeptide reads, in one-letter code: MLNETVLAPLHREIGGKMVDFGGWDMPLHYGSQVEEHQKVRTDAGMFDVSHMTVVDVTGAGAKTFLQYVLANDVAKLTKNGKALYSGMLNHEGGVVDDLIVYLMEWGYRVVVNCATREKDLAWMVEHAKGFEVALNERDDLAMIAVQGPAAREKTAQILPELLTMDLDIFQGADVAALGDVTFFVARTGYTGEDGYEIMLPTSDADAFWRALMAVGVAPCGLGARDTLRLEAGMNLYGHEMDDNTSPLVANMAWTIAWQPEERNFIGREAISAEKAAGVTHKLVGLVLQDRGVLRAEQVVTCEGVEGEGVITSGTFSPTLSKSVALARVPVAFSGECTVAVRNKQLKALVVKPSFVRLGKALV.

Belongs to the GcvT family. As to quaternary structure, the glycine cleavage system is composed of four proteins: P, T, L and H.

The enzyme catalyses N(6)-[(R)-S(8)-aminomethyldihydrolipoyl]-L-lysyl-[protein] + (6S)-5,6,7,8-tetrahydrofolate = N(6)-[(R)-dihydrolipoyl]-L-lysyl-[protein] + (6R)-5,10-methylene-5,6,7,8-tetrahydrofolate + NH4(+). Functionally, the glycine cleavage system catalyzes the degradation of glycine. This Saccharophagus degradans (strain 2-40 / ATCC 43961 / DSM 17024) protein is Aminomethyltransferase.